Consider the following 363-residue polypeptide: Phosphoribosylformylglycinamidine cyclo-ligase (363 aa).

Belongs to the AIR synthase family.

Its subcellular location is the cytoplasm. The enzyme catalyses 2-formamido-N(1)-(5-O-phospho-beta-D-ribosyl)acetamidine + ATP = 5-amino-1-(5-phospho-beta-D-ribosyl)imidazole + ADP + phosphate + H(+). It participates in purine metabolism; IMP biosynthesis via de novo pathway; 5-amino-1-(5-phospho-D-ribosyl)imidazole from N(2)-formyl-N(1)-(5-phospho-D-ribosyl)glycinamide: step 2/2. This Parvibaculum lavamentivorans (strain DS-1 / DSM 13023 / NCIMB 13966) protein is Phosphoribosylformylglycinamidine cyclo-ligase.